Here is a 126-residue protein sequence, read N- to C-terminus: Large ribosomal subunit protein uL22 (126 aa).

The protein belongs to the universal ribosomal protein uL22 family. Part of the 50S ribosomal subunit.

Its function is as follows. This protein binds specifically to 23S rRNA; its binding is stimulated by other ribosomal proteins, e.g. L4, L17, and L20. It is important during the early stages of 50S assembly. It makes multiple contacts with different domains of the 23S rRNA in the assembled 50S subunit and ribosome. Functionally, the globular domain of the protein is located near the polypeptide exit tunnel on the outside of the subunit, while an extended beta-hairpin is found that lines the wall of the exit tunnel in the center of the 70S ribosome. This chain is Large ribosomal subunit protein uL22, found in Phenylobacterium zucineum (strain HLK1).